The following is a 324-amino-acid chain: Methionyl-tRNA formyltransferase (324 aa).

A (6S)-5,6,7,8-tetrahydrofolate-binding site is contributed by 113-116; that stretch reads SLLP.

This sequence belongs to the Fmt family.

The catalysed reaction is L-methionyl-tRNA(fMet) + (6R)-10-formyltetrahydrofolate = N-formyl-L-methionyl-tRNA(fMet) + (6S)-5,6,7,8-tetrahydrofolate + H(+). Functionally, attaches a formyl group to the free amino group of methionyl-tRNA(fMet). The formyl group appears to play a dual role in the initiator identity of N-formylmethionyl-tRNA by promoting its recognition by IF2 and preventing the misappropriation of this tRNA by the elongation apparatus. The protein is Methionyl-tRNA formyltransferase of Bacteroides fragilis (strain ATCC 25285 / DSM 2151 / CCUG 4856 / JCM 11019 / LMG 10263 / NCTC 9343 / Onslow / VPI 2553 / EN-2).